The sequence spans 450 residues: 3-phosphoshikimate 1-carboxyvinyltransferase (450 aa).

3-phosphoshikimate contacts are provided by K28, S29, and R33. A phosphoenolpyruvate-binding site is contributed by K28. Phosphoenolpyruvate contacts are provided by G100 and R128. Residues S173, Q175, D326, and K353 each coordinate 3-phosphoshikimate. Q175 lines the phosphoenolpyruvate pocket. D326 acts as the Proton acceptor in catalysis. Phosphoenolpyruvate contacts are provided by R357 and R402.

Belongs to the EPSP synthase family. In terms of assembly, monomer.

The protein localises to the cytoplasm. The catalysed reaction is 3-phosphoshikimate + phosphoenolpyruvate = 5-O-(1-carboxyvinyl)-3-phosphoshikimate + phosphate. It functions in the pathway metabolic intermediate biosynthesis; chorismate biosynthesis; chorismate from D-erythrose 4-phosphate and phosphoenolpyruvate: step 6/7. In terms of biological role, catalyzes the transfer of the enolpyruvyl moiety of phosphoenolpyruvate (PEP) to the 5-hydroxyl of shikimate-3-phosphate (S3P) to produce enolpyruvyl shikimate-3-phosphate and inorganic phosphate. This chain is 3-phosphoshikimate 1-carboxyvinyltransferase, found in Brucella abortus (strain S19).